The chain runs to 629 residues: Coiled-coil domain-containing protein 120 (629 aa).

Positions 31-70 (RLRGLLDRQRALQEALSVKLQELRKVCLQEAELTGQLPPE) are involved in CYTH2-binding. Positions 109–173 (ELALEALERE…LRDFRARLGL (65 aa)) form a coiled coil. Composition is skewed to low complexity over residues 209–219 (HSESSSLSESG) and 279–294 (ASPT…SASS). The interval 209–356 (HSESSSLSES…LFAARTRRSN (148 aa)) is disordered. Residues 323-332 (RQWSGSQDSQ) show a composition bias toward polar residues. A phosphoserine mark is found at S355 and S357. Disordered regions lie at residues 399–432 (QPVP…GAPR) and 602–629 (PSQA…FTDG). The segment covering 418-432 (ARPSSAAPASRGAPR) has biased composition (low complexity). Residue R432 is modified to Omega-N-methylarginine.

Interacts with NIN and CEP170; leading to recruit them to centrosomes. Interacts with CYTH2; this interaction is direct and stabilizes CCDC120, possibly by preventing ubiquitination. Ubiquitinated; interaction with CYTH2 may prevent ubiquitination.

The protein resides in the cytoplasm. Its subcellular location is the cytoskeleton. The protein localises to the microtubule organizing center. It is found in the centrosome. It localises to the centriole. The protein resides in the cell projection. Its subcellular location is the neuron projection. The protein localises to the growth cone. It is found in the endosome. Its function is as follows. Centriolar protein required for centriole subdistal appendage assembly and microtubule anchoring in interphase cells. Together with CCDC68, cooperate with subdistal appendage components ODF2, NIN and CEP170 for hierarchical subdistal appendage assembly. Recruits NIN and CEP170 to centrosomes. Also required for neurite growth. Localizes CYTH2 to vesicles to allow its transport along neurites, and subsequent ARF6 activation and neurite growth. This is Coiled-coil domain-containing protein 120 from Mus musculus (Mouse).